Here is a 487-residue protein sequence, read N- to C-terminus: WRKY transcription factor 1 (487 aa).

The tract at residues 69–104 (QSEVDVASPVSEKAPKVSESSGALSLQSGSEGNSPF) is disordered. At Ser76 the chain carries Phosphoserine. Positions 86 to 101 (SESSGALSLQSGSEGN) are enriched in polar residues. Positions 105-169 (IREKVMEDGY…YFGEHDHPKP (65 aa)) form a DNA-binding region, WRKY 1. Residues Cys136, Cys141, His164, and His166 each coordinate Zn(2+). Residues 255–287 (SSRITGDNTHKDYNSPTAKRRKKGGNIELSPVE) form a disordered region. The Nuclear localization signal motif lies at 273–277 (KRRKK). Positions 301–366 (TLFDIVNDGY…YEGKHDHDMP (66 aa)) form a DNA-binding region, WRKY 2. The Zn(2+) site is built by Cys332, Cys337, His361, and His363. The interval 380–487 (EVDDKEGDAN…QKPKTEPAQS (108 aa)) is disordered. Polar residues predominate over residues 390–401 (KTPQSSTLQSIT). Composition is skewed to basic and acidic residues over residues 429–462 (LDEKLKEEIKERSDANKDHAANHAKPEAKSDDKT) and 476–487 (EEQKPKTEPAQS).

Belongs to the WRKY group I family. In terms of tissue distribution, expressed to similar levels in root and flower, to a somewhat lower level in stem and to low levels in leaf and siliques.

Its subcellular location is the nucleus. In terms of biological role, transcription factor. Binds to a 5'-CGTTGACCGAG-3' consensus core sequence which contains a W box, a frequently occurring elicitor-responsive cis-acting element. This is WRKY transcription factor 1 from Arabidopsis thaliana (Mouse-ear cress).